The following is a 40-amino-acid chain: MADTTGRIPLWLIGTVTGTLVIGLIGIFFYGSYSGLGSSL.

A helical transmembrane segment spans residues 8-28 (IPLWLIGTVTGTLVIGLIGIF).

It belongs to the PsbJ family. In terms of assembly, PSII is composed of 1 copy each of membrane proteins PsbA, PsbB, PsbC, PsbD, PsbE, PsbF, PsbH, PsbI, PsbJ, PsbK, PsbL, PsbM, PsbT, PsbX, PsbY, PsbZ, Psb30/Ycf12, at least 3 peripheral proteins of the oxygen-evolving complex and a large number of cofactors. It forms dimeric complexes.

The protein localises to the plastid. It is found in the chloroplast thylakoid membrane. One of the components of the core complex of photosystem II (PSII). PSII is a light-driven water:plastoquinone oxidoreductase that uses light energy to abstract electrons from H(2)O, generating O(2) and a proton gradient subsequently used for ATP formation. It consists of a core antenna complex that captures photons, and an electron transfer chain that converts photonic excitation into a charge separation. This is Photosystem II reaction center protein J from Cycas taitungensis (Prince sago).